Consider the following 790-residue polypeptide: AMP deaminase (790 aa).

Positions 1–14 (MSTPLRGSSPQVSF) are enriched in polar residues. Residues 1–26 (MSTPLRGSSPQVSFYESELDQEGGSD) are disordered. H221 and H223 together coordinate Zn(2+). Residues H223 and 292–297 (KFNLKY) each bind substrate. H488 is a binding site for Zn(2+). Substrate is bound at residue E491. H510 functions as the Proton acceptor in the catalytic mechanism. D565 is a binding site for Zn(2+). Residue 566 to 569 (DPLQ) participates in substrate binding. Disordered stretches follow at residues 698 to 726 (NKLR…SSPG) and 739 to 790 (PPPL…KSDK). Low complexity-rich tracts occupy residues 706 to 726 (GSTP…SSPG) and 750 to 781 (NNNN…TTTN).

This sequence belongs to the metallo-dependent hydrolases superfamily. Adenosine and AMP deaminases family. Homodimer. Requires Zn(2+) as cofactor.

Its subcellular location is the cytoplasm. The catalysed reaction is AMP + H2O + H(+) = IMP + NH4(+). Its pathway is purine metabolism; IMP biosynthesis via salvage pathway; IMP from AMP: step 1/1. Its activity is regulated as follows. Activated by ATP, inhibited by GTP, EDTA and inorganic phosphate. In terms of biological role, catalyzes the conversion of adenosine monophosphate (AMP) to inosine monophosphate (IMP) and ammonia (NH4(+)). Participates in the regulation of the adenylated nucleotide pool and the interconversion to guanylated nucleotides during early morphodifferentiation. The protein is AMP deaminase (amdA) of Dictyostelium discoideum (Social amoeba).